The sequence spans 537 residues: Chaperonin GroEL (537 aa).

Residues 30-33, 87-91, G414, 477-479, and D493 contribute to the ATP site; these read TLGP, DGTTT, and DAV.

It belongs to the chaperonin (HSP60) family. In terms of assembly, forms a cylinder of 14 subunits composed of two heptameric rings stacked back-to-back. Interacts with the co-chaperonin GroES.

Its subcellular location is the cytoplasm. It catalyses the reaction ATP + H2O + a folded polypeptide = ADP + phosphate + an unfolded polypeptide.. Together with its co-chaperonin GroES, plays an essential role in assisting protein folding. The GroEL-GroES system forms a nano-cage that allows encapsulation of the non-native substrate proteins and provides a physical environment optimized to promote and accelerate protein folding. This is Chaperonin GroEL from Coprothermobacter proteolyticus (strain ATCC 35245 / DSM 5265 / OCM 4 / BT).